We begin with the raw amino-acid sequence, 287 residues long: Phosphatidylserine decarboxylase proenzyme (287 aa).

Residues D90, H147, and S252 each act as charge relay system; for autoendoproteolytic cleavage activity in the active site. S252 functions as the Schiff-base intermediate with substrate; via pyruvic acid; for decarboxylase activity in the catalytic mechanism. S252 is modified (pyruvic acid (Ser); by autocatalysis).

This sequence belongs to the phosphatidylserine decarboxylase family. PSD-B subfamily. Prokaryotic type I sub-subfamily. In terms of assembly, heterodimer of a large membrane-associated beta subunit and a small pyruvoyl-containing alpha subunit. Requires pyruvate as cofactor. Post-translationally, is synthesized initially as an inactive proenzyme. Formation of the active enzyme involves a self-maturation process in which the active site pyruvoyl group is generated from an internal serine residue via an autocatalytic post-translational modification. Two non-identical subunits are generated from the proenzyme in this reaction, and the pyruvate is formed at the N-terminus of the alpha chain, which is derived from the carboxyl end of the proenzyme. The autoendoproteolytic cleavage occurs by a canonical serine protease mechanism, in which the side chain hydroxyl group of the serine supplies its oxygen atom to form the C-terminus of the beta chain, while the remainder of the serine residue undergoes an oxidative deamination to produce ammonia and the pyruvoyl prosthetic group on the alpha chain. During this reaction, the Ser that is part of the protease active site of the proenzyme becomes the pyruvoyl prosthetic group, which constitutes an essential element of the active site of the mature decarboxylase.

It localises to the cell membrane. The catalysed reaction is a 1,2-diacyl-sn-glycero-3-phospho-L-serine + H(+) = a 1,2-diacyl-sn-glycero-3-phosphoethanolamine + CO2. Its pathway is phospholipid metabolism; phosphatidylethanolamine biosynthesis; phosphatidylethanolamine from CDP-diacylglycerol: step 2/2. In terms of biological role, catalyzes the formation of phosphatidylethanolamine (PtdEtn) from phosphatidylserine (PtdSer). In Pseudomonas putida (strain ATCC 700007 / DSM 6899 / JCM 31910 / BCRC 17059 / LMG 24140 / F1), this protein is Phosphatidylserine decarboxylase proenzyme.